The chain runs to 539 residues: GMP synthase [glutamine-hydrolyzing] (539 aa).

The Glutamine amidotransferase type-1 domain occupies 4-202; the sequence is KVLILDFGSQ…VLEIAGAKPD (199 aa). Catalysis depends on cysteine 81, which acts as the Nucleophile. Residues histidine 176 and glutamate 178 contribute to the active site. The region spanning 203–395 is the GMPS ATP-PPase domain; sequence WVMRDHIDEA…LGLPHEMVYR (193 aa). Residue 230 to 236 coordinates ATP; the sequence is SGGVDSS.

In terms of assembly, homodimer.

It catalyses the reaction XMP + L-glutamine + ATP + H2O = GMP + L-glutamate + AMP + diphosphate + 2 H(+). The protein operates within purine metabolism; GMP biosynthesis; GMP from XMP (L-Gln route): step 1/1. In terms of biological role, catalyzes the synthesis of GMP from XMP. The polypeptide is GMP synthase [glutamine-hydrolyzing] (Ralstonia pickettii (strain 12J)).